The sequence spans 249 residues: Derlin-2.2 (249 aa).

At 1-21 (MAQAVEEWYRQMPIITRSYLT) the chain is on the cytoplasmic side. Residues 22–42 (AAVVTTVGCTLEIISPYHLYL) form a helical membrane-spanning segment. Topologically, residues 43-96 (NPKLVVQHYEIWRLVTNFLYFRKMDLDFLFHMFFLARYCKLLEENSFRGRTADF) are lumenal. Residues 97-117 (FYMLLFGATVLTGIVLIGGMI) form a helical membrane-spanning segment. The Cytoplasmic segment spans residues 118 to 122 (PYISE). A helical membrane pass occupies residues 123 to 143 (TFARILFLSNSLTFMMVYVWS). The Lumenal portion of the chain corresponds to 144 to 152 (KHNPFIHMS). The chain crosses the membrane as a helical span at residues 153–173 (FLGLFTFTAAYLPWVLLGFSI). Topologically, residues 174-249 (LVGSSTWVDL…GAIGVDPQAQ (76 aa)) are cytoplasmic.

The protein belongs to the derlin family. Expressed in roots, stalks, leaves, immature ears, embryo and endosperm.

It is found in the endoplasmic reticulum membrane. In terms of biological role, may be involved in the degradation process of specific misfolded endoplasmic reticulum (ER) luminal proteins. The protein is Derlin-2.2 (DER2.2) of Zea mays (Maize).